The chain runs to 391 residues: Protein ABCI12, chloroplastic (391 aa).

The transit peptide at 1 to 63 (MNHSNLANPT…LAAKRVFIVR (63 aa)) directs the protein to the chloroplast. The next 5 helical transmembrane spans lie at 134–154 (ANLV…ILVL), 168–188 (LLSG…PPML), 229–249 (VGST…ICLA), 263–283 (FLFP…TLLL), and 370–390 (FASV…EYFL).

The protein resides in the plastid. It is found in the chloroplast. It localises to the membrane. The sequence is that of Protein ABCI12, chloroplastic (ABCI12) from Arabidopsis thaliana (Mouse-ear cress).